We begin with the raw amino-acid sequence, 160 residues long: Putative pre-16S rRNA nuclease (160 aa).

Belongs to the YqgF nuclease family.

It is found in the cytoplasm. Functionally, could be a nuclease involved in processing of the 5'-end of pre-16S rRNA. The polypeptide is Putative pre-16S rRNA nuclease (Cutibacterium acnes (strain DSM 16379 / KPA171202) (Propionibacterium acnes)).